Consider the following 60-residue polypeptide: Prophage outer membrane lipoprotein RzoD (60 aa).

The signal sequence occupies residues 1–19 (MRKLKMMLCVMMLPLVVVG). A lipid anchor (N-palmitoyl cysteine) is attached at cysteine 20. Cysteine 20 carries S-diacylglycerol cysteine lipidation.

This sequence belongs to the lambdalikevirus o-spanin family. In terms of assembly, homodimer; disulfide-linked. Interacts (via C-terminus) with RZ (via C-terminus). Part of the spanin complex which spans the entire periplasmic space. The spanin complex is composed of spanin, inner membrane subunit and spanin, outer membrane subunit.

It localises to the cell outer membrane. In terms of biological role, component of the spanin complex that disrupts the outer membrane and causes cell lysis during virus exit. The spanin complex conducts the final step in cell lysis by disrupting the outer membrane after holin and endolysin action have permeabilized the inner membrane and degraded the host peptidoglycans. The sequence is that of Prophage outer membrane lipoprotein RzoD (rzoD) from Escherichia coli (strain K12).